Consider the following 94-residue polypeptide: Small ribosomal subunit protein bS18 (94 aa).

Belongs to the bacterial ribosomal protein bS18 family. In terms of assembly, part of the 30S ribosomal subunit. Forms a tight heterodimer with protein bS6.

Its function is as follows. Binds as a heterodimer with protein bS6 to the central domain of the 16S rRNA, where it helps stabilize the platform of the 30S subunit. This chain is Small ribosomal subunit protein bS18, found in Rickettsia bellii (strain OSU 85-389).